Consider the following 629-residue polypeptide: tRNA uridine 5-carboxymethylaminomethyl modification enzyme MnmG (629 aa).

FAD contacts are provided by residues 18–23, Val-130, and Ser-188; that span reads GGGHAG. 280–294 is an NAD(+) binding site; that stretch reads GPRYCPSIEDKVVRF. Gln-377 is a binding site for FAD.

Belongs to the MnmG family. As to quaternary structure, homodimer. Heterotetramer of two MnmE and two MnmG subunits. The cofactor is FAD.

Its subcellular location is the cytoplasm. In terms of biological role, NAD-binding protein involved in the addition of a carboxymethylaminomethyl (cmnm) group at the wobble position (U34) of certain tRNAs, forming tRNA-cmnm(5)s(2)U34. The protein is tRNA uridine 5-carboxymethylaminomethyl modification enzyme MnmG of Granulibacter bethesdensis (strain ATCC BAA-1260 / CGDNIH1).